A 300-amino-acid chain; its full sequence is Putative hydro-lyase Dshi_3152 (300 aa).

Belongs to the D-glutamate cyclase family.

This Dinoroseobacter shibae (strain DSM 16493 / NCIMB 14021 / DFL 12) protein is Putative hydro-lyase Dshi_3152.